A 247-amino-acid polypeptide reads, in one-letter code: ATP synthase subunit a, chloroplastic (247 aa).

A run of 5 helical transmembrane segments spans residues Q38–V58, V95–L115, I134–S154, L199–L219, and G220–G240.

Belongs to the ATPase A chain family. F-type ATPases have 2 components, CF(1) - the catalytic core - and CF(0) - the membrane proton channel. CF(1) has five subunits: alpha(3), beta(3), gamma(1), delta(1), epsilon(1). CF(0) has four main subunits: a, b, b' and c.

The protein resides in the plastid. It is found in the chloroplast thylakoid membrane. In terms of biological role, key component of the proton channel; it plays a direct role in the translocation of protons across the membrane. The protein is ATP synthase subunit a, chloroplastic of Populus trichocarpa (Western balsam poplar).